Consider the following 342-residue polypeptide: 11-beta-hydroxysteroid dehydrogenase-like 6 (342 aa).

The helical; Signal-anchor for type II membrane protein transmembrane segment at 10-30 (FLFPLLTLYALLVFYPTYQRL) threads the bilayer. NADP(+)-binding positions include 54-80 (GAASGIGEALAYEYGKRGAYLALVDIR) and Asp-105. Substrate is bound at residue Ser-184. The active-site Proton acceptor is Tyr-197. Residues 197-201 (YCASK) and Lys-201 contribute to the NADP(+) site.

It belongs to the short-chain dehydrogenases/reductases (SDR) family.

The protein localises to the membrane. The sequence is that of 11-beta-hydroxysteroid dehydrogenase-like 6 (HSD6) from Arabidopsis thaliana (Mouse-ear cress).